The primary structure comprises 159 residues: Serine-protein kinase RsbW (159 aa).

The protein belongs to the anti-sigma-factor family.

It catalyses the reaction L-seryl-[protein] + ATP = O-phospho-L-seryl-[protein] + ADP + H(+). The enzyme catalyses L-threonyl-[protein] + ATP = O-phospho-L-threonyl-[protein] + ADP + H(+). Negative regulator of sigma-B activity. Phosphorylates and inactivates its specific antagonist protein, RsbV. Upon phosphorylation of RsbV, RsbW is released and binds to sigma-B, thereby blocking its ability to form an RNA polymerase holoenzyme (E-sigma-B). The chain is Serine-protein kinase RsbW from Staphylococcus epidermidis.